Consider the following 251-residue polypeptide: tRNA (guanine-N(1)-)-methyltransferase (251 aa).

Residues G117 and 137-142 contribute to the S-adenosyl-L-methionine site; that span reads IGDYVL.

This sequence belongs to the RNA methyltransferase TrmD family. As to quaternary structure, homodimer.

The protein localises to the cytoplasm. The catalysed reaction is guanosine(37) in tRNA + S-adenosyl-L-methionine = N(1)-methylguanosine(37) in tRNA + S-adenosyl-L-homocysteine + H(+). Specifically methylates guanosine-37 in various tRNAs. The chain is tRNA (guanine-N(1)-)-methyltransferase from Haemophilus ducreyi (strain 35000HP / ATCC 700724).